Here is a 248-residue protein sequence, read N- to C-terminus: PF03932 family protein CutC (248 aa).

This sequence belongs to the CutC family. Homodimer.

The protein resides in the cytoplasm. This Shigella boydii serotype 18 (strain CDC 3083-94 / BS512) protein is PF03932 family protein CutC.